The sequence spans 520 residues: GMP synthase [glutamine-hydrolyzing] (520 aa).

The 194-residue stretch at 12 to 205 (KIIVLDYGSQ…AIFICGARGD (194 aa)) folds into the Glutamine amidotransferase type-1 domain. The Nucleophile role is filled by Cys89. Active-site residues include His179 and Glu181. Positions 206–395 (WSMDNFIDMQ…LGMPENIVWR (190 aa)) constitute a GMPS ATP-PPase domain. 233–239 (SGGVDSS) serves as a coordination point for ATP.

In terms of assembly, homodimer.

It carries out the reaction XMP + L-glutamine + ATP + H2O = GMP + L-glutamate + AMP + diphosphate + 2 H(+). It functions in the pathway purine metabolism; GMP biosynthesis; GMP from XMP (L-Gln route): step 1/1. Functionally, catalyzes the synthesis of GMP from XMP. This is GMP synthase [glutamine-hydrolyzing] from Streptococcus uberis (strain ATCC BAA-854 / 0140J).